The following is a 939-amino-acid chain: Valine--tRNA ligase (939 aa).

A 'HIGH' region motif is present at residues 47-57 (PNVTGILHMGH). Positions 563-567 (KLSKS) match the 'KMSKS' region motif. Lys566 contributes to the ATP binding site. A coiled-coil region spans residues 874-939 (EHLAKERVRL…QSILDKLASL (66 aa)).

The protein belongs to the class-I aminoacyl-tRNA synthetase family. ValS type 1 subfamily. As to quaternary structure, monomer.

It localises to the cytoplasm. It carries out the reaction tRNA(Val) + L-valine + ATP = L-valyl-tRNA(Val) + AMP + diphosphate. In terms of biological role, catalyzes the attachment of valine to tRNA(Val). As ValRS can inadvertently accommodate and process structurally similar amino acids such as threonine, to avoid such errors, it has a 'posttransfer' editing activity that hydrolyzes mischarged Thr-tRNA(Val) in a tRNA-dependent manner. The chain is Valine--tRNA ligase from Chlamydia trachomatis serovar L2b (strain UCH-1/proctitis).